We begin with the raw amino-acid sequence, 177 residues long: Early nodulin-like protein 6 (177 aa).

Positions 1 to 23 (MGGQKIVLLSIFVCFYVFSLVSC) are cleaved as a signal peptide. The Phytocyanin domain maps to 24-127 (TEFEAGGENG…GQKMIIKVME (104 aa)). Asparagine 41 carries an N-linked (GlcNAc...) asparagine glycan. The cysteines at positions 81 and 115 are disulfide-linked. A lipid anchor (GPI-anchor amidated asparagine) is attached at asparagine 149. Positions 150–177 (HAVRKTSRFLGAGLVTISILVITVFSLV) are cleaved as a propeptide — removed in mature form.

Belongs to the early nodulin-like (ENODL) family. Confined to flowers.

It localises to the cell membrane. Functionally, may act as a carbohydrate transporter. The chain is Early nodulin-like protein 6 from Arabidopsis thaliana (Mouse-ear cress).